The chain runs to 281 residues: Ribosomal RNA small subunit methyltransferase J (281 aa).

Residues 129–130 (RD), 145–146 (ER), and D199 each bind S-adenosyl-L-methionine.

The protein belongs to the methyltransferase superfamily. RsmJ family.

The protein localises to the cytoplasm. It carries out the reaction guanosine(1516) in 16S rRNA + S-adenosyl-L-methionine = N(2)-methylguanosine(1516) in 16S rRNA + S-adenosyl-L-homocysteine + H(+). Its function is as follows. Specifically methylates the guanosine in position 1516 of 16S rRNA. This is Ribosomal RNA small subunit methyltransferase J from Laribacter hongkongensis (strain HLHK9).